The sequence spans 113 residues: Large ribosomal subunit protein eL33 (113 aa).

The protein belongs to the eukaryotic ribosomal protein eL33 family.

The sequence is that of Large ribosomal subunit protein eL33 (RPL35A) from Tetrahymena thermophila (strain SB210).